The following is a 388-amino-acid chain: S-adenosylmethionine synthase (388 aa).

H16 contributes to the ATP binding site. D18 lines the Mg(2+) pocket. E44 is a binding site for K(+). The L-methionine site is built by E57 and Q100. Residues 100–110 (QSPEIAQGVDR) form a flexible loop region. ATP contacts are provided by residues 165–167 (DAK), 231–232 (KF), D240, 246–247 (RK), A263, and K267. D240 is an L-methionine binding site. Position 271 (K271) interacts with L-methionine.

This sequence belongs to the AdoMet synthase family. Homotetramer; dimer of dimers. Mg(2+) is required as a cofactor. The cofactor is K(+).

The protein localises to the cytoplasm. It catalyses the reaction L-methionine + ATP + H2O = S-adenosyl-L-methionine + phosphate + diphosphate. It functions in the pathway amino-acid biosynthesis; S-adenosyl-L-methionine biosynthesis; S-adenosyl-L-methionine from L-methionine: step 1/1. In terms of biological role, catalyzes the formation of S-adenosylmethionine (AdoMet) from methionine and ATP. The overall synthetic reaction is composed of two sequential steps, AdoMet formation and the subsequent tripolyphosphate hydrolysis which occurs prior to release of AdoMet from the enzyme. The sequence is that of S-adenosylmethionine synthase from Psychrobacter sp. (strain PRwf-1).